A 120-amino-acid chain; its full sequence is Large ribosomal subunit protein bL12 (120 aa).

The protein belongs to the bacterial ribosomal protein bL12 family. Homodimer. Part of the ribosomal stalk of the 50S ribosomal subunit. Forms a multimeric L10(L12)X complex, where L10 forms an elongated spine to which 2 to 4 L12 dimers bind in a sequential fashion. Binds GTP-bound translation factors.

Forms part of the ribosomal stalk which helps the ribosome interact with GTP-bound translation factors. Is thus essential for accurate translation. The sequence is that of Large ribosomal subunit protein bL12 from Aeromonas salmonicida (strain A449).